We begin with the raw amino-acid sequence, 214 residues long: Probable chorismate pyruvate-lyase (214 aa).

Substrate is bound by residues Arg74, Leu112, and Glu173. A disordered region spans residues 183-214 (AAPENTGAGGTRLPRRIDTHHTPSKQEERPES). A compositionally biased stretch (basic and acidic residues) spans 197 to 214 (RRIDTHHTPSKQEERPES).

It belongs to the UbiC family.

Its subcellular location is the cytoplasm. The enzyme catalyses chorismate = 4-hydroxybenzoate + pyruvate. The protein operates within cofactor biosynthesis; ubiquinone biosynthesis. Removes the pyruvyl group from chorismate, with concomitant aromatization of the ring, to provide 4-hydroxybenzoate (4HB) for the ubiquinone pathway. The polypeptide is Probable chorismate pyruvate-lyase (Cupriavidus metallidurans (strain ATCC 43123 / DSM 2839 / NBRC 102507 / CH34) (Ralstonia metallidurans)).